The primary structure comprises 475 residues: UDP-glycosyltransferase 708A6 (475 aa).

Residues Ser286, 348–349 (WV), 366–374 (HCGWNSLTE), and 388–391 (FGDQ) each bind UDP-alpha-D-glucose.

This sequence belongs to the UDP-glycosyltransferase family. In terms of tissue distribution, expressed in radicles, hypocotyls and juvenile leaves. Expressed at low levels in roots.

Bifunctional glycosyltransferase that can produce both C- and O-glycosidated flavonoids. Converts 2-hydroxynaringenin to isovitexin. Converts eriodictyol to orientin and isoorientin. Converts naringenin and eriodictyol to naringenin 7-O-glucoside and eriodictyol 7-O-glucoside, respectively. In Zea mays (Maize), this protein is UDP-glycosyltransferase 708A6.